Consider the following 367-residue polypeptide: Pectate lyase 1 (367 aa).

An N-terminal signal peptide occupies residues 1-21; it reads MASPCLVAVLVFLCAIVSCYS. Disulfide bonds link Cys28–Cys45 and Cys128–Cys147. Asn148 is a glycosylation site (N-linked (GlcNAc...) asparagine). Asp170 serves as a coordination point for Ca(2+). N-linked (GlcNAc...) asparagine glycosylation is present at Asn178. Positions 194 and 198 each coordinate Ca(2+). The active site involves Arg250. Residue Asn293 is glycosylated (N-linked (GlcNAc...) asparagine). Cys306 and Cys312 are disulfide-bonded.

Belongs to the polysaccharide lyase 1 family. Amb a subfamily. Requires Ca(2+) as cofactor.

It catalyses the reaction Eliminative cleavage of (1-&gt;4)-alpha-D-galacturonan to give oligosaccharides with 4-deoxy-alpha-D-galact-4-enuronosyl groups at their non-reducing ends.. Its pathway is glycan metabolism; pectin degradation; 2-dehydro-3-deoxy-D-gluconate from pectin: step 2/5. Has pectate lyase activity. The polypeptide is Pectate lyase 1 (Hesperocyparis arizonica (Arizona cypress)).